We begin with the raw amino-acid sequence, 440 residues long: Chromosome partition protein MukF (440 aa).

The leucine-zipper stretch occupies residues 208–236; that stretch reads LSETSGTLRELQDTLEAAGDKLQANLLRI.

This sequence belongs to the MukF family. In terms of assembly, interacts, and probably forms a ternary complex, with MukE and MukB via its C-terminal region. The complex formation is stimulated by calcium or magnesium. It is required for an interaction between MukE and MukB.

Its subcellular location is the cytoplasm. The protein localises to the nucleoid. Functionally, involved in chromosome condensation, segregation and cell cycle progression. May participate in facilitating chromosome segregation by condensation DNA from both sides of a centrally located replisome during cell division. Not required for mini-F plasmid partitioning. Probably acts via its interaction with MukB and MukE. Overexpression results in anucleate cells. It has a calcium binding activity. The sequence is that of Chromosome partition protein MukF from Salmonella paratyphi B (strain ATCC BAA-1250 / SPB7).